The chain runs to 251 residues: Myozenin-3 (251 aa).

S31 carries the post-translational modification Phosphoserine. The interval 50 to 67 (LLFQKRQRRVQKFTFELA) is binding to ACTN2, PPP3CA and TCAP. Residues 67–110 (AASQRAMLAGSARRKVTGTAESGTVANANGPEGPNYRSELHIFP) form a binding to FLNC region. A disordered region spans residues 79-102 (RRKVTGTAESGTVANANGPEGPNY). The binding to ACTN2 stretch occupies residues 186 to 207 (PSPNDYRNFNKTPVPFGGPLVG).

This sequence belongs to the myozenin family. In terms of assembly, interacts with ACTN2, LDB3, FLNC, PPP3CA and TCAP. As to expression, expressed specifically in skeletal muscle. Not detected in heart.

Its subcellular location is the cytoplasm. The protein resides in the myofibril. It is found in the sarcomere. The protein localises to the z line. Its function is as follows. Myozenins may serve as intracellular binding proteins involved in linking Z line proteins such as alpha-actinin, gamma-filamin, TCAP/telethonin, LDB3/ZASP and localizing calcineurin signaling to the sarcomere. Plays an important role in the modulation of calcineurin signaling. May play a role in myofibrillogenesis. This is Myozenin-3 from Homo sapiens (Human).